The sequence spans 158 residues: uncharacterized protein (158 aa).

The first 22 residues, 1 to 22 (MKKIPNKLLAVSAFLTITTTYA), serve as a signal peptide directing secretion. A helical membrane pass occupies residues 120–140 (LTGIIEYDTKFENHYETLVEA).

The protein resides in the cell membrane. This is an uncharacterized protein from Bacillus cereus.